The primary structure comprises 159 residues: Probable cyclic pyranopterin monophosphate synthase (159 aa).

Substrate-binding positions include 75 to 77 (LCH) and 111 to 112 (ME). The active site involves D126.

Belongs to the MoaC family. In terms of assembly, homohexamer; trimer of dimers.

The catalysed reaction is (8S)-3',8-cyclo-7,8-dihydroguanosine 5'-triphosphate = cyclic pyranopterin phosphate + diphosphate. Its pathway is cofactor biosynthesis; molybdopterin biosynthesis. Its function is as follows. Catalyzes the conversion of (8S)-3',8-cyclo-7,8-dihydroguanosine 5'-triphosphate to cyclic pyranopterin monophosphate (cPMP). The polypeptide is Probable cyclic pyranopterin monophosphate synthase (Pyrococcus abyssi (strain GE5 / Orsay)).